The primary structure comprises 286 residues: 4-hydroxybenzoate octaprenyltransferase (286 aa).

Helical transmembrane passes span 20–40 (IGTF…AGGM), 43–63 (LKVL…GCII), 95–115 (ILFV…NPLV), 116–136 (VQLS…KRFT), 142–162 (FLGV…LGTV), 167–187 (WWLF…YAMV), 210–230 (QIIG…GLSA), and 235–255 (VFAL…KLIF).

The protein belongs to the UbiA prenyltransferase family. The cofactor is Mg(2+).

The protein localises to the cell inner membrane. The enzyme catalyses all-trans-octaprenyl diphosphate + 4-hydroxybenzoate = 4-hydroxy-3-(all-trans-octaprenyl)benzoate + diphosphate. The protein operates within cofactor biosynthesis; ubiquinone biosynthesis. In terms of biological role, catalyzes the prenylation of para-hydroxybenzoate (PHB) with an all-trans polyprenyl group. Mediates the second step in the final reaction sequence of ubiquinone-8 (UQ-8) biosynthesis, which is the condensation of the polyisoprenoid side chain with PHB, generating the first membrane-bound Q intermediate 3-octaprenyl-4-hydroxybenzoate. The chain is 4-hydroxybenzoate octaprenyltransferase from Shewanella loihica (strain ATCC BAA-1088 / PV-4).